The primary structure comprises 232 residues: 5'-methylthioadenosine/S-adenosylhomocysteine nucleosidase (232 aa).

Glu12 acts as the Proton acceptor in catalysis. Substrate is bound by residues Gly78, Ile152, and 173-174; that span reads ME. The active-site Proton donor is the Asp197.

This sequence belongs to the PNP/UDP phosphorylase family. MtnN subfamily. Homodimer.

It catalyses the reaction S-adenosyl-L-homocysteine + H2O = S-(5-deoxy-D-ribos-5-yl)-L-homocysteine + adenine. The enzyme catalyses S-methyl-5'-thioadenosine + H2O = 5-(methylsulfanyl)-D-ribose + adenine. It carries out the reaction 5'-deoxyadenosine + H2O = 5-deoxy-D-ribose + adenine. It functions in the pathway amino-acid biosynthesis; L-methionine biosynthesis via salvage pathway; S-methyl-5-thio-alpha-D-ribose 1-phosphate from S-methyl-5'-thioadenosine (hydrolase route): step 1/2. Catalyzes the irreversible cleavage of the glycosidic bond in both 5'-methylthioadenosine (MTA) and S-adenosylhomocysteine (SAH/AdoHcy) to adenine and the corresponding thioribose, 5'-methylthioribose and S-ribosylhomocysteine, respectively. Also cleaves 5'-deoxyadenosine, a toxic by-product of radical S-adenosylmethionine (SAM) enzymes, into 5-deoxyribose and adenine. Thus, is required for in vivo function of the radical SAM enzymes biotin synthase and lipoic acid synthase, that are inhibited by 5'-deoxyadenosine accumulation. This Pectobacterium carotovorum subsp. carotovorum (strain PC1) protein is 5'-methylthioadenosine/S-adenosylhomocysteine nucleosidase.